Consider the following 100-residue polypeptide: Ubiquitin-related modifier 1 homolog (100 aa).

Position 100 is a 1-thioglycine (Gly100). Residue Gly100 forms a Glycyl lysine isopeptide (Gly-Lys) (interchain with K-? in acceptor proteins) linkage.

This sequence belongs to the URM1 family. In terms of assembly, interacts with cer. Post-translationally, C-terminal thiocarboxylation occurs in 2 steps, it is first acyl-adenylated (-COAMP) via the hesA/moeB/thiF part of the MOCS3 homolog, then thiocarboxylated (-COSH) via the rhodanese domain of the MOCS3 homolog.

Its subcellular location is the cytoplasm. The protein operates within tRNA modification; 5-methoxycarbonylmethyl-2-thiouridine-tRNA biosynthesis. Its function is as follows. Acts as a sulfur carrier required for 2-thiolation of mcm(5)S(2)U at tRNA wobble positions of cytosolic tRNA(Lys), tRNA(Glu) and tRNA(Gln). Serves as sulfur donor in tRNA 2-thiolation reaction by being thiocarboxylated (-COSH) at its C-terminus by MOCS3. The sulfur is then transferred to tRNA to form 2-thiolation of mcm(5)S(2)U. Also acts as a ubiquitin-like protein (UBL) that is covalently conjugated via an isopeptide bond to lysine residues of target proteins such as Prx2/Jafrac1, Ciao1, Eip71CD and GILT1. The thiocarboxylated form serves as substrate for conjugation and oxidative stress specifically induces the formation of UBL-protein conjugates. The sequence is that of Ubiquitin-related modifier 1 homolog from Drosophila willistoni (Fruit fly).